Reading from the N-terminus, the 198-residue chain is Putative mycofactocin biosynthesis transcriptional regulator MftR (198 aa).

In terms of domain architecture, HTH tetR-type spans 12-72 (STTPHHISDV…GDFSTHLAQL (61 aa)). The segment at residues 35–54 (SVDDIARAAGIARRTLFRYY) is a DNA-binding region (H-T-H motif).

Functionally, may regulate a gene cluster involved in mycofactocin expression. Mycofactocin is a conserved polypeptide that might serve as an electron carrier. This chain is Putative mycofactocin biosynthesis transcriptional regulator MftR (mftR), found in Mycobacterium tuberculosis (strain ATCC 25618 / H37Rv).